Here is a 34-residue protein sequence, read N- to C-terminus: U1-poneritoxin-Na2a (34 aa).

Expressed by the venom gland.

The protein resides in the secreted. May have antimicrobial properties, like most ant linear peptides. The protein is U1-poneritoxin-Na2a of Neoponera apicalis (Ant).